Reading from the N-terminus, the 445-residue chain is MAVQIENLGSLDRKMTLEFARADLAKAREARLAKVGKSMKMAGFRPGKVPKNLVEKQHGMQVDFELQFDKAAELFYELAQKEGVALAGQPRLEPKSEIDAEKVVFDAFFEVLPEVKIGDFSKAEVTKYTTDIGEAEIDRALDALRKQQVHYHPRGEAGPHGDGGSNTAAQNGDQVVINFVGKIDGVEFAGGKAENFECVLGEGRMLPEFEAATLGLKVGESKSFPLSFPADYHGKDVAGKTAEFTITVKSVNWAHLPVVDDAFALSLGVTEGGVTKMRAEVKENLDREVKRRVTTLLKSEVMDKLNSLCELDVPKSLVASEQERLVEGARQDLMQRGVPNAKDAPIPAEIFAEQATKRVRLGLILSELVKNQNLIATADQIKAEIDEQATTYEDPKEVIRWFYRNPGRLKDIENLVLEDNVIKYFTSQAKVNDKSVTFEELSKLN.

The PPIase FKBP-type domain occupies 172 to 257 (GDQVVINFVG…VKSVNWAHLP (86 aa)).

The protein belongs to the FKBP-type PPIase family. Tig subfamily.

It is found in the cytoplasm. It catalyses the reaction [protein]-peptidylproline (omega=180) = [protein]-peptidylproline (omega=0). In terms of biological role, involved in protein export. Acts as a chaperone by maintaining the newly synthesized protein in an open conformation. Functions as a peptidyl-prolyl cis-trans isomerase. The sequence is that of Trigger factor from Polynucleobacter necessarius subsp. necessarius (strain STIR1).